We begin with the raw amino-acid sequence, 285 residues long: Eukaryotic translation initiation factor 3 subunit F-2 (285 aa).

Positions 11–145 (VVLQPLVLFQ…TRLYCGVEMG (135 aa)) constitute an MPN domain.

Belongs to the eIF-3 subunit F family. Component of the eukaryotic translation initiation factor 3 (eIF-3) complex. The eIF-3 complex interacts with pix.

The protein resides in the cytoplasm. Functionally, component of the eukaryotic translation initiation factor 3 (eIF-3) complex, which is involved in protein synthesis of a specialized repertoire of mRNAs and, together with other initiation factors, stimulates binding of mRNA and methionyl-tRNAi to the 40S ribosome. The eIF-3 complex specifically targets and initiates translation of a subset of mRNAs involved in cell proliferation. This chain is Eukaryotic translation initiation factor 3 subunit F-2, found in Drosophila ananassae (Fruit fly).